Reading from the N-terminus, the 201-residue chain is Small ribosomal subunit protein uS4 (201 aa).

The disordered stretch occupies residues 1 to 42 (MARYTGPVTRKSRRLGTDLVGGDQSFEKRPYPPGQHGRARIK). An S4 RNA-binding domain is found at 91–157 (SRLDNVVYRA…VPFQIARETA (67 aa)).

Belongs to the universal ribosomal protein uS4 family. Part of the 30S ribosomal subunit. Contacts protein S5. The interaction surface between S4 and S5 is involved in control of translational fidelity.

Its function is as follows. One of the primary rRNA binding proteins, it binds directly to 16S rRNA where it nucleates assembly of the body of the 30S subunit. In terms of biological role, with S5 and S12 plays an important role in translational accuracy. This is Small ribosomal subunit protein uS4 from Mycobacterium ulcerans (strain Agy99).